The sequence spans 116 residues: Non-specific lipid-transfer protein 1 (116 aa).

An N-terminal signal peptide occupies residues 1 to 25 (MARAQLVLVALVAALLLAAPHAAVA). 4 cysteine pairs are disulfide-bonded: Cys28-Cys75, Cys38-Cys52, Cys53-Cys98, and Cys73-Cys112.

It belongs to the plant LTP family. As to expression, aleurone (external part) of the seeds.

Its function is as follows. Plant non-specific lipid-transfer proteins transfer phospholipids as well as galactolipids across membranes. May play a role in wax or cutin deposition in the cell walls of expanding epidermal cells and certain secretory tissues. The polypeptide is Non-specific lipid-transfer protein 1 (LTP) (Oryza sativa subsp. indica (Rice)).